A 1966-amino-acid polypeptide reads, in one-letter code: Dedicator of cytokinesis protein 4 (1966 aa).

The 62-residue stretch at 6–67 (EHEKYGVVIA…PSSYVHLKNA (62 aa)) folds into the SH3 domain. Tyr-167 carries the phosphotyrosine modification. Thr-193 carries the phosphothreonine modification. The C2 DOCK-type domain occupies 401 to 574 (RNDLYITIER…ESFCITSFLC (174 aa)). Residues 1190–1596 (KTELNKEEMY…LGIQEFSACM (407 aa)) form the DOCKER domain. A phosphoserine mark is found at Ser-1599, Ser-1607, Ser-1614, Ser-1618, Ser-1620, and Ser-1631. 2 disordered regions span residues 1648–1729 (SQAS…IYPT) and 1742–1966 (IGDG…VSQL). A compositionally biased stretch (low complexity) spans 1672–1703 (PSPSTSSLSSTHSASPNVTSSAPSSARASPLL). At Ser-1769 the chain carries Phosphoserine. The short motif at 1788-1794 (PPVPPRP) is the SH3-binding element. Polar residues predominate over residues 1795 to 1809 (TQTASPARHTTSVSP). Low complexity predominate over residues 1838–1863 (SNSPVLSGSYSSGISSLSRCSTSETS). The span at 1864-1873 (GFENQVNEQS) shows a compositional bias: polar residues. The span at 1941–1954 (SHLENGARRTDPGP) shows a compositional bias: basic and acidic residues.

This sequence belongs to the DOCK family. Interacts with nucleotide-free Rap1; functions as a guanine nucleotide exchange factor (GEF) for Rap1. Interacts (via DOCKER domain) with RAC1; functions as a guanine nucleotide exchange factor (GEF) for RAC1. Interacts with the SH3 domain of CRK. Interacts with FASLG. Interacts with ELMO2 and EPHA2; mediates activation of RAC1 by EPHA2. Interacts with USH1C (via PDZ 1 domain). In terms of tissue distribution, widely expressed at low level. Highly expressed in skeletal muscle, prostate and ovary. As to expression, may be specifically expressed in the brain and eye.

The protein resides in the cell membrane. It is found in the cell projection. Its subcellular location is the cytoplasm. The protein localises to the cytosol. Functions as a guanine nucleotide exchange factor (GEF) that promotes the exchange of GDP to GTP, converting inactive GDP-bound small GTPases into their active GTP-bound form. Involved in regulation of adherens junction between cells. Plays a role in cell migration. Functionally, has a higher guanine nucleotide exchange factor activity compared to other isoforms. In Homo sapiens (Human), this protein is Dedicator of cytokinesis protein 4 (DOCK4).